We begin with the raw amino-acid sequence, 212 residues long: Large ribosomal subunit protein uL3 (212 aa).

The interval Arg129–Tyr156 is disordered. Low complexity predominate over residues Ala142–Gly153.

It belongs to the universal ribosomal protein uL3 family. In terms of assembly, part of the 50S ribosomal subunit. Forms a cluster with proteins L14 and L19.

In terms of biological role, one of the primary rRNA binding proteins, it binds directly near the 3'-end of the 23S rRNA, where it nucleates assembly of the 50S subunit. In Acaryochloris marina (strain MBIC 11017), this protein is Large ribosomal subunit protein uL3.